A 175-amino-acid polypeptide reads, in one-letter code: Shikimate kinase (175 aa).

11 to 16 (GAGKTT) lines the ATP pocket. Thr-15 is a Mg(2+) binding site. The substrate site is built by Asp-33, Arg-57, and Gly-79. Arg-118 is an ATP binding site. A substrate-binding site is contributed by Arg-140.

This sequence belongs to the shikimate kinase family. Monomer. It depends on Mg(2+) as a cofactor.

It is found in the cytoplasm. It carries out the reaction shikimate + ATP = 3-phosphoshikimate + ADP + H(+). Its pathway is metabolic intermediate biosynthesis; chorismate biosynthesis; chorismate from D-erythrose 4-phosphate and phosphoenolpyruvate: step 5/7. Its function is as follows. Catalyzes the specific phosphorylation of the 3-hydroxyl group of shikimic acid using ATP as a cosubstrate. The protein is Shikimate kinase of Phocaeicola vulgatus (strain ATCC 8482 / DSM 1447 / JCM 5826 / CCUG 4940 / NBRC 14291 / NCTC 11154) (Bacteroides vulgatus).